We begin with the raw amino-acid sequence, 137 residues long: Small ribosomal subunit protein uS12 (137 aa).

A disordered region spans residues Met-1–Lys-57. Asp-102 is subject to 3-methylthioaspartic acid. A disordered region spans residues Ser-118–Asn-137.

The protein belongs to the universal ribosomal protein uS12 family. Part of the 30S ribosomal subunit. Contacts proteins S8 and S17. May interact with IF1 in the 30S initiation complex.

With S4 and S5 plays an important role in translational accuracy. In terms of biological role, interacts with and stabilizes bases of the 16S rRNA that are involved in tRNA selection in the A site and with the mRNA backbone. Located at the interface of the 30S and 50S subunits, it traverses the body of the 30S subunit contacting proteins on the other side and probably holding the rRNA structure together. The combined cluster of proteins S8, S12 and S17 appears to hold together the shoulder and platform of the 30S subunit. The polypeptide is Small ribosomal subunit protein uS12 (Staphylococcus aureus (strain COL)).